The following is a 670-amino-acid chain: NADH-ubiquinone oxidoreductase chain 5 (670 aa).

Helical transmembrane passes span 3 to 23, 36 to 56, 76 to 96, 113 to 133, 136 to 156, 178 to 198, 218 to 238, 250 to 270, 283 to 303, 319 to 339, 340 to 360, 375 to 395, 425 to 445, 461 to 481, and 618 to 638; these read LLIV…GRFL, VSFS…GASA, FLFD…SSLV, FMCY…GDNF, LFLG…FWFT, LALG…STIF, ITLI…QIGL, TPVS…FMIA, LIVI…TGIL, LGYM…FHLM, NHAF…HAMS, FPLT…FPFL, VSVL…FLVP, IPMA…GYLA, and SGSV…FVTF.

It belongs to the complex I subunit 5 family.

The protein resides in the mitochondrion inner membrane. It catalyses the reaction a ubiquinone + NADH + 5 H(+)(in) = a ubiquinol + NAD(+) + 4 H(+)(out). In terms of biological role, core subunit of the mitochondrial membrane respiratory chain NADH dehydrogenase (Complex I) that is believed to belong to the minimal assembly required for catalysis. Complex I functions in the transfer of electrons from NADH to the respiratory chain. The immediate electron acceptor for the enzyme is believed to be ubiquinone. The protein is NADH-ubiquinone oxidoreductase chain 5 (ND5) of Triticum aestivum (Wheat).